A 554-amino-acid polypeptide reads, in one-letter code: Phenylalanine--tRNA ligase beta subunit (554 aa).

Residues 276 to 351 (LTPKSRMISV…INYGYEKFEG (76 aa)) enclose the B5 domain. Mg(2+)-binding residues include Asp-329, Asp-335, Glu-338, and Glu-339.

Belongs to the phenylalanyl-tRNA synthetase beta subunit family. Type 2 subfamily. In terms of assembly, tetramer of two alpha and two beta subunits. Mg(2+) serves as cofactor.

It localises to the cytoplasm. The catalysed reaction is tRNA(Phe) + L-phenylalanine + ATP = L-phenylalanyl-tRNA(Phe) + AMP + diphosphate + H(+). The polypeptide is Phenylalanine--tRNA ligase beta subunit (Methanococcus maripaludis (strain C6 / ATCC BAA-1332)).